Here is a 1067-residue protein sequence, read N- to C-terminus: Mediator of RNA polymerase II transcription subunit 5 (1067 aa).

This sequence belongs to the Mediator complex subunit 5 family. Component of the Mediator complex.

It is found in the nucleus. Functionally, component of the Mediator complex, a coactivator involved in the regulated transcription of nearly all RNA polymerase II-dependent genes. Mediator functions as a bridge to convey information from gene-specific regulatory proteins to the basal RNA polymerase II transcription machinery. Mediator is recruited to promoters by direct interactions with regulatory proteins and serves as a scaffold for the assembly of a functional preinitiation complex with RNA polymerase II and the general transcription factors. This Kluyveromyces lactis (strain ATCC 8585 / CBS 2359 / DSM 70799 / NBRC 1267 / NRRL Y-1140 / WM37) (Yeast) protein is Mediator of RNA polymerase II transcription subunit 5 (NUT1).